A 511-amino-acid chain; its full sequence is Inositol-3-phosphate synthase isozyme 1 (511 aa).

The NAD(+) site is built by Gly-71, Gly-72, Asn-73, Asn-74, Asp-144, Ile-181, Gln-191, Arg-194, Thr-231, Ala-232, Asn-233, Thr-234, Gly-282, Ser-283, Asp-307, Ser-310, Asn-341, Asn-342, Asp-343, Lys-356, Ala-394, Asp-395, Asp-423, and Ser-424.

Belongs to the myo-inositol 1-phosphate synthase family. Homotrimer or homotetramer. Interacts with ATXR5 and ATXR6. Requires NAD(+) as cofactor. In terms of tissue distribution, expressed in siliques, leaves, roots, seed endosperm, but not in embryos. Highest expression in leaves, but restricted to vascular tissue in older leaves.

The protein localises to the cytoplasm. Its subcellular location is the cytosol. It localises to the nucleus. The enzyme catalyses D-glucose 6-phosphate = 1D-myo-inositol 3-phosphate. It participates in polyol metabolism; myo-inositol biosynthesis; myo-inositol from D-glucose 6-phosphate: step 1/2. In terms of biological role, key enzyme in myo-inositol biosynthesis pathway that catalyzes the conversion of glucose 6-phosphate to 1-myo-inositol 1-phosphate in a NAD-dependent manner. Catalyzes the majority of myo-inositol synthesis required for plant growth and development. Acts as a repressor of programmed cell death and protects plant cells against cell death under high light intensity or long days. Controls its own transcription by inhibiting ATXR6 activity. Reduces the deposition of inhibitory histone marks on its own promoter. The chain is Inositol-3-phosphate synthase isozyme 1 (IPS1) from Arabidopsis thaliana (Mouse-ear cress).